We begin with the raw amino-acid sequence, 147 residues long: SsrA-binding protein (147 aa).

Belongs to the SmpB family.

The protein resides in the cytoplasm. In terms of biological role, required for rescue of stalled ribosomes mediated by trans-translation. Binds to transfer-messenger RNA (tmRNA), required for stable association of tmRNA with ribosomes. tmRNA and SmpB together mimic tRNA shape, replacing the anticodon stem-loop with SmpB. tmRNA is encoded by the ssrA gene; the 2 termini fold to resemble tRNA(Ala) and it encodes a 'tag peptide', a short internal open reading frame. During trans-translation Ala-aminoacylated tmRNA acts like a tRNA, entering the A-site of stalled ribosomes, displacing the stalled mRNA. The ribosome then switches to translate the ORF on the tmRNA; the nascent peptide is terminated with the 'tag peptide' encoded by the tmRNA and targeted for degradation. The ribosome is freed to recommence translation, which seems to be the essential function of trans-translation. In Thermosipho melanesiensis (strain DSM 12029 / CIP 104789 / BI429), this protein is SsrA-binding protein.